A 334-amino-acid polypeptide reads, in one-letter code: Probable type II restriction enzyme HindVP (334 aa).

The catalysed reaction is Endonucleolytic cleavage of DNA to give specific double-stranded fragments with terminal 5'-phosphates.. A P subtype restriction enzyme that recognizes the double-stranded sequence 5'-GRCGYC-3'; the cleavage site is unknown. The polypeptide is Probable type II restriction enzyme HindVP (hindVRP) (Haemophilus influenzae (strain ATCC 51907 / DSM 11121 / KW20 / Rd)).